The chain runs to 801 residues: Probable phosphoketolase (801 aa).

This sequence belongs to the XFP family. It depends on thiamine diphosphate as a cofactor.

The protein is Probable phosphoketolase of Bradyrhizobium diazoefficiens (strain JCM 10833 / BCRC 13528 / IAM 13628 / NBRC 14792 / USDA 110).